Consider the following 138-residue polypeptide: Large ribosomal subunit protein bL17 (138 aa).

This sequence belongs to the bacterial ribosomal protein bL17 family. Part of the 50S ribosomal subunit. Contacts protein L32.

The protein is Large ribosomal subunit protein bL17 of Granulibacter bethesdensis (strain ATCC BAA-1260 / CGDNIH1).